A 327-amino-acid polypeptide reads, in one-letter code: S-adenosylmethionine/S-adenosylhomocysteine transporter (327 aa).

10 consecutive transmembrane segments (helical) span residues 22-42, 53-73, 85-105, 114-134, 143-163, 165-185, 202-222, 240-260, 271-291, and 294-314; these read CDMA…SFAL, LFVT…LLLC, IMPI…LEFI, TACF…YVQL, LGGL…GGSE, VAEW…ATCL, SLSM…LSLI, LFLQ…YNLF, FLSF…WLLL, and SFPP…RLIY. In terms of domain architecture, EamA 1 spans 34–157; that stretch reads FIWSSSFALS…LGLVSYLVYL (124 aa). The region spanning 189–313 is the EamA 2 domain; it reads GWTLLRKLGR…GFMVLGCRLI (125 aa).

The protein belongs to the drug/metabolite transporter (DMT) superfamily. 10 TMS drug/metabolite exporter (DME) (TC 2.A.7.3) family.

It is found in the cell membrane. CCCP treatment reduces SAM intracellular uptake by 50%. Transports S-adenosylmethionine (SAM) and S-adenosylhomocysteine (SAH). Allows bacteria to acquire SAM from the eukaryotic host cell and to likely remove the toxic by-product SAH. This is S-adenosylmethionine/S-adenosylhomocysteine transporter from Chlamydia trachomatis serovar L2 (strain ATCC VR-902B / DSM 19102 / 434/Bu).